The following is a 122-amino-acid chain: Large ribosomal subunit protein uL14 (122 aa).

Belongs to the universal ribosomal protein uL14 family. In terms of assembly, part of the 50S ribosomal subunit. Forms a cluster with proteins L3 and L19. In the 70S ribosome, L14 and L19 interact and together make contacts with the 16S rRNA in bridges B5 and B8.

In terms of biological role, binds to 23S rRNA. Forms part of two intersubunit bridges in the 70S ribosome. In Kineococcus radiotolerans (strain ATCC BAA-149 / DSM 14245 / SRS30216), this protein is Large ribosomal subunit protein uL14.